The following is an 805-amino-acid chain: Putative cation-transporting ATPase MJ1226 (805 aa).

A run of 4 helical transmembrane segments spans residues 53-73 (SYFW…SAII), 75-95 (HWVD…VGFW), 226-246 (IGDY…AVEL), and 258-278 (FALV…LSIT). Aspartate 311 (4-aspartylphosphate intermediate) is an active-site residue. A run of 6 helical transmembrane segments spans residues 615–637 (YVIY…ILIL), 641–663 (PITA…AIAY), 680–700 (ILML…LIFY), 712–734 (ELQS…VTRI), 747–769 (LLFW…GIFM), and 773–790 (GWDL…WMLI).

It belongs to the cation transport ATPase (P-type) (TC 3.A.3) family. Type IIIA subfamily.

The protein localises to the cell membrane. It catalyses the reaction ATP + H2O = ADP + phosphate + H(+). This is Putative cation-transporting ATPase MJ1226 from Methanocaldococcus jannaschii (strain ATCC 43067 / DSM 2661 / JAL-1 / JCM 10045 / NBRC 100440) (Methanococcus jannaschii).